A 299-amino-acid chain; its full sequence is GTPase Era (299 aa).

Residues 5-175 (RSGFVCFVGR…TDVLAGKLPP (171 aa)) enclose the Era-type G domain. Positions 13-20 (GRPNTGKS) are G1. Residue 13 to 20 (GRPNTGKS) participates in GTP binding. The G2 stretch occupies residues 39 to 43 (QTTRH). A G3 region spans residues 60-63 (DTPG). Residues 60 to 64 (DTPGL) and 124 to 127 (TKID) contribute to the GTP site. The tract at residues 124-127 (TKID) is G4. Residues 154–156 (VSA) form a G5 region. Residues 206–285 (VRDELPHSLA…YLDLRVKIAK (80 aa)) form the KH type-2 domain.

It belongs to the TRAFAC class TrmE-Era-EngA-EngB-Septin-like GTPase superfamily. Era GTPase family. In terms of assembly, monomer.

Its subcellular location is the cell envelope. The protein resides in the secreted. It is found in the cell wall. Its function is as follows. Exhibits GTPase activity. Binds RNA but is probably not involved in ribosome assembly in mycobacteria. This is GTPase Era from Mycobacterium sp. (strain JLS).